Consider the following 359-residue polypeptide: Large ribosomal subunit protein uL3 (359 aa).

The segment at 336–359 (VRPPAKRPPAEAPQITYISRESKQ) is disordered.

This sequence belongs to the universal ribosomal protein uL3 family. In terms of assembly, part of the 50S ribosomal subunit. Forms a cluster with proteins L14 and L24e.

In terms of biological role, one of the primary rRNA binding proteins, it binds directly near the 3'-end of the 23S rRNA, where it nucleates assembly of the 50S subunit. In Thermococcus sibiricus (strain DSM 12597 / MM 739), this protein is Large ribosomal subunit protein uL3.